The primary structure comprises 560 residues: Mannosyl-oligosaccharide 1,2-alpha-mannosidase MNS1 (560 aa).

Residues 1 to 27 (MARSRSISGYGIWKYLNPAYYLRRPRR) are Cytoplasmic-facing. A helical; Signal-anchor for type II membrane protein membrane pass occupies residues 28 to 47 (LALLFIVFVSVSMLVWDRIN). The stretch at 47-80 (NLAREHEVEVFKLNEEVSRLEQMLEELNGGVGNK) forms a coiled coil. Residues 48-560 (LAREHEVEVF…QRKFGHQINV (513 aa)) are Lumenal-facing. Catalysis depends on Glu179, which acts as the Proton donor. Asp312 is an active-site residue. A glycan (N-linked (GlcNAc...) asparagine) is linked at Asn326. A disulfide bond links Cys377 and Cys409. Glu423 acts as the Proton donor in catalysis. Residue Glu445 is part of the active site. Asn459 carries an N-linked (GlcNAc...) asparagine glycan. Ca(2+) is bound at residue Thr529.

This sequence belongs to the glycosyl hydrolase 47 family. Ca(2+) serves as cofactor. It depends on Mn(2+) as a cofactor. Mg(2+) is required as a cofactor. In terms of tissue distribution, expressed in flowers, siliques, stems, leaves, roots, pollen grains, shoot apical meristems, hypocotyls and upper region of the root.

Its subcellular location is the golgi apparatus membrane. The enzyme catalyses N(4)-(alpha-D-Man-(1-&gt;2)-alpha-D-Man-(1-&gt;2)-alpha-D-Man-(1-&gt;3)-[alpha-D-Man-(1-&gt;2)-alpha-D-Man-(1-&gt;3)-[alpha-D-Man-(1-&gt;2)-alpha-D-Man-(1-&gt;6)]-alpha-D-Man-(1-&gt;6)]-beta-D-Man-(1-&gt;4)-beta-D-GlcNAc-(1-&gt;4)-beta-D-GlcNAc)-L-asparaginyl-[protein] (N-glucan mannose isomer 9A1,2,3B1,2,3) + 4 H2O = N(4)-(alpha-D-Man-(1-&gt;3)-[alpha-D-Man-(1-&gt;3)-[alpha-D-Man-(1-&gt;6)]-alpha-D-Man-(1-&gt;6)]-beta-D-Man-(1-&gt;4)-beta-D-GlcNAc-(1-&gt;4)-beta-D-GlcNAc)-L-asparaginyl-[protein] (N-glucan mannose isomer 5A1,2) + 4 beta-D-mannose. It catalyses the reaction N(4)-(alpha-D-Man-(1-&gt;2)-alpha-D-Man-(1-&gt;2)-alpha-D-Man-(1-&gt;3)-[alpha-D-Man-(1-&gt;3)-[alpha-D-Man-(1-&gt;2)-alpha-D-Man-(1-&gt;6)]-alpha-D-Man-(1-&gt;6)]-beta-D-Man-(1-&gt;4)-beta-D-GlcNAc-(1-&gt;4)-beta-D-GlcNAc)-L-asparaginyl-[protein] (N-glucan mannose isomer 8A1,2,3B1,3) + 3 H2O = N(4)-(alpha-D-Man-(1-&gt;3)-[alpha-D-Man-(1-&gt;3)-[alpha-D-Man-(1-&gt;6)]-alpha-D-Man-(1-&gt;6)]-beta-D-Man-(1-&gt;4)-beta-D-GlcNAc-(1-&gt;4)-beta-D-GlcNAc)-L-asparaginyl-[protein] (N-glucan mannose isomer 5A1,2) + 3 beta-D-mannose. It carries out the reaction N(4)-(alpha-D-Man-(1-&gt;2)-alpha-D-Man-(1-&gt;2)-alpha-D-Man-(1-&gt;3)-[alpha-D-Man-(1-&gt;2)-alpha-D-Man-(1-&gt;3)-[alpha-D-Man-(1-&gt;2)-alpha-D-Man-(1-&gt;6)]-alpha-D-Man-(1-&gt;6)]-beta-D-Man-(1-&gt;4)-beta-D-GlcNAc-(1-&gt;4)-beta-D-GlcNAc)-L-asparaginyl-[protein] (N-glucan mannose isomer 9A1,2,3B1,2,3) + H2O = N(4)-(alpha-D-Man-(1-&gt;2)-alpha-D-Man-(1-&gt;2)-alpha-D-Man-(1-&gt;3)-[alpha-D-Man-(1-&gt;3)-[alpha-D-Man-(1-&gt;2)-alpha-D-Man-(1-&gt;6)]-alpha-D-Man-(1-&gt;6)]-beta-D-Man-(1-&gt;4)-beta-D-GlcNAc-(1-&gt;4)-beta-D-GlcNAc)-L-asparaginyl-[protein] (N-glucan mannose isomer 8A1,2,3B1,3) + beta-D-mannose. It participates in protein modification; protein glycosylation. Its activity is regulated as follows. Inhibited by kifunensine and 1-deoxymannojirimycin, but not by swainsonine. Class I alpha-mannosidase essential for early N-glycan processing. Progressively trims alpha-1,2-linked mannose residues. Produces Man(5)GlcNAc(2) from Man(8)GlcNAc(2), but only Man(6)GlcNAc(2) from Man(9)GlcNAc(2). Has difficulty acting on the terminal mannose of the b-branch. Involved in root development and cell wall biosynthesis. The chain is Mannosyl-oligosaccharide 1,2-alpha-mannosidase MNS1 (MNS1) from Arabidopsis thaliana (Mouse-ear cress).